A 545-amino-acid chain; its full sequence is Thermosome subunit beta (545 aa).

It belongs to the TCP-1 chaperonin family. Forms a Heterooligomeric complex of two stacked eight-membered rings.

In terms of biological role, molecular chaperone; binds unfolded polypeptides in vitro, and has a weak ATPase activity. This Archaeoglobus fulgidus (strain ATCC 49558 / DSM 4304 / JCM 9628 / NBRC 100126 / VC-16) protein is Thermosome subunit beta (thsB).